A 165-amino-acid polypeptide reads, in one-letter code: Cell division protein SepF (165 aa).

Positions 23–75 are disordered; sequence DEYGDYAGDYETQETAPVATRSSKRESRPAPVSDLSERRRPASGPTGVVAELS.

This sequence belongs to the SepF family. Homodimer. Interacts with FtsZ.

It localises to the cytoplasm. Cell division protein that is part of the divisome complex and is recruited early to the Z-ring. Probably stimulates Z-ring formation, perhaps through the cross-linking of FtsZ protofilaments. Its function overlaps with FtsA. The sequence is that of Cell division protein SepF from Nocardioides sp. (strain ATCC BAA-499 / JS614).